A 150-amino-acid polypeptide reads, in one-letter code: Cyclin-dependent kinases regulatory subunit (150 aa).

Residues 115–137 (AAAQQQQQQQQQQQQQQQQHQTQ) are compositionally biased toward low complexity. A disordered region spans residues 115 to 150 (AAAQQQQQQQQQQQQQQQQHQTQSISNDMQVPPQIS).

It belongs to the CKS family. In terms of assembly, forms a stable but non-covalent complex with the CDC28 protein and with a cyclin.

Functionally, binds to the catalytic subunit of the cyclin dependent kinase (CDC28) and is essential for its biological function. This Saccharomyces cerevisiae (strain ATCC 204508 / S288c) (Baker's yeast) protein is Cyclin-dependent kinases regulatory subunit.